The chain runs to 346 residues: MPINLKGRSLDSALNFTTAQINYLIDLAIDLNAVNTKLHIQNRPLAGKNIVLLFQKDSTRTRCAFEVAAFDLGMGCTYIGPSGSNFGKKESIEDTAKVLGSMYDGIEFRGFKQSDVDALVKYSGVPVWNGLTDAEHPTQMLADYMTIKELKGDLKGRKIVFAGDIKNNVARSLMIGAAFVGMDIVLVGPKAQHELVQNGAGYKEVFEQCQALFQLNGGSVSFSTDKLQAAKNADVIYTDVWLSLGEDFSLFEERIQELGQFQVDMAMIKAAKSDVIFLHCLPAFHDDHTSFSLEIKQKLGKKYPVVKTGAMEVTDTVFQSKHNMAFIQAENRLHTIKAVILATLGY.

Residues 58 to 61, Asn-85, Arg-109, and 136 to 139 contribute to the carbamoyl phosphate site; these read STRT and HPTQ. L-ornithine is bound by residues Asn-168, Asp-239, and 243 to 244; that span reads SL. Carbamoyl phosphate-binding positions include 280 to 281 and Arg-332; that span reads CL.

The protein belongs to the aspartate/ornithine carbamoyltransferase superfamily. OTCase family.

The protein resides in the cytoplasm. It carries out the reaction carbamoyl phosphate + L-ornithine = L-citrulline + phosphate + H(+). It participates in amino-acid degradation; L-arginine degradation via ADI pathway; carbamoyl phosphate from L-arginine: step 2/2. Reversibly catalyzes the transfer of the carbamoyl group from carbamoyl phosphate (CP) to the N(epsilon) atom of ornithine (ORN) to produce L-citrulline. This is Ornithine carbamoyltransferase, catabolic from Mycoplasma pneumoniae (strain ATCC 29342 / M129 / Subtype 1) (Mycoplasmoides pneumoniae).